Consider the following 99-residue polypeptide: DNA-directed RNA polymerase subunit omega (99 aa).

The protein belongs to the RNA polymerase subunit omega family. As to quaternary structure, the RNAP catalytic core consists of 2 alpha, 1 beta, 1 beta' and 1 omega subunit. When a sigma factor is associated with the core the holoenzyme is formed, which can initiate transcription.

It catalyses the reaction RNA(n) + a ribonucleoside 5'-triphosphate = RNA(n+1) + diphosphate. Promotes RNA polymerase assembly. Latches the N- and C-terminal regions of the beta' subunit thereby facilitating its interaction with the beta and alpha subunits. In Xylella fastidiosa (strain Temecula1 / ATCC 700964), this protein is DNA-directed RNA polymerase subunit omega.